The following is a 289-amino-acid chain: ATP synthase gamma chain (289 aa).

The protein belongs to the ATPase gamma chain family. In terms of assembly, F-type ATPases have 2 components, CF(1) - the catalytic core - and CF(0) - the membrane proton channel. CF(1) has five subunits: alpha(3), beta(3), gamma(1), delta(1), epsilon(1). CF(0) has three main subunits: a, b and c.

The protein resides in the cell inner membrane. Its function is as follows. Produces ATP from ADP in the presence of a proton gradient across the membrane. The gamma chain is believed to be important in regulating ATPase activity and the flow of protons through the CF(0) complex. This chain is ATP synthase gamma chain, found in Halorhodospira halophila (strain DSM 244 / SL1) (Ectothiorhodospira halophila (strain DSM 244 / SL1)).